The following is a 284-amino-acid chain: 2-dehydro-3-deoxyphosphooctonate aldolase (284 aa).

It belongs to the KdsA family.

Its subcellular location is the cytoplasm. The catalysed reaction is D-arabinose 5-phosphate + phosphoenolpyruvate + H2O = 3-deoxy-alpha-D-manno-2-octulosonate-8-phosphate + phosphate. The protein operates within carbohydrate biosynthesis; 3-deoxy-D-manno-octulosonate biosynthesis; 3-deoxy-D-manno-octulosonate from D-ribulose 5-phosphate: step 2/3. It participates in bacterial outer membrane biogenesis; lipopolysaccharide biosynthesis. The chain is 2-dehydro-3-deoxyphosphooctonate aldolase from Mannheimia succiniciproducens (strain KCTC 0769BP / MBEL55E).